A 521-amino-acid chain; its full sequence is Runt-related transcription factor 2 (521 aa).

2 disordered regions span residues 18 to 59 (FWDP…QQQQ) and 222 to 340 (DGPR…RRIS). 2 stretches are compositionally biased toward low complexity: residues 21-33 (PSTS…PSSS) and 47-59 (AAQQ…QQQQ). The Runt domain maps to 101–229 (TMVEIIADHP…TVDGPREPRR (129 aa)). Residue K238 forms a Glycyl lysine isopeptide (Lys-Gly) (interchain with G-Cter in SUMO2) linkage. Residues 242 to 258 (FSDRLSDLGRIPHPSMR) are required for interaction with FOXO1. R267 is subject to Asymmetric dimethylarginine. A compositionally biased stretch (polar residues) spans 267–326 (RPSLNSAPSPFNPQGQSQITDPRQAQSSPPWSYDQSYPSYLSQMTSPSIHSTTPLSSTRG). Residues 336–439 (PRRISDDDTA…SQSQSGPFQT (104 aa)) form an interaction with KAT6A region. The residue at position 340 (S340) is a Phosphoserine. The interval 374–468 (RQFPSISSLT…VPGGDRSPSR (95 aa)) is interaction with KAT6B. A Phosphoserine; by CDK1 modification is found at S451. The tract at residues 460-521 (PGGDRSPSRM…RMDESVWRPY (62 aa)) is disordered. Composition is skewed to polar residues over residues 473 to 492 (CTTT…NQND) and 499 to 511 (SHSS…NSSG). Basic and acidic residues predominate over residues 512 to 521 (RMDESVWRPY).

Heterodimer of an alpha and a beta subunit. The alpha subunit binds DNA as a monomer and through the Runt domain. DNA-binding is increased by heterodimerization. Interacts with XRCC6 (Ku70) and XRCC5 (Ku80). Interacts with HIVEP3. Interacts with IFI204. Interaction with SATB2; the interaction results in enhanced DNA binding and transactivation by these transcription factors. Binds to HIPK3. Interacts with FOXO1 (via a C-terminal region); the interaction inhibits RUNX2 transcriptional activity towards BGLAP. This interaction is prevented on insulin or IGF1 stimulation as FOXO1 is exported from the nucleus. Interacts with CCNB1, KAT6A and KAT6B. Interacts with FOXP3. Interacts with TMEM119. Interacts with OLFM2. Interacts with IPO7; the interaction inhibits RUNX2 nuclear translocation in osteoblasts. As to quaternary structure, interacts with DDX5. Post-translationally, phosphorylated; probably by MAP kinases (MAPK). Phosphorylation by HIPK3 is required for the SPEN/MINT and FGF2 transactivation during osteoblastic differentiation. Phosphorylation at Ser-451 by CDK1 promotes endothelial cell proliferation required for tumor angiogenesis probably by facilitating cell cycle progression. Isoform 3 is phosphorylated on Ser-340. Specifically expressed in osteoblasts.

The protein resides in the nucleus. It is found in the cytoplasm. In terms of biological role, transcription factor involved in osteoblastic differentiation and skeletal morphogenesis. Essential for the maturation of osteoblasts and both intramembranous and endochondral ossification. CBF binds to the core site, 5'-PYGPYGGT-3', of a number of enhancers and promoters, including murine leukemia virus, polyomavirus enhancer, T-cell receptor enhancers, osteocalcin, osteopontin, bone sialoprotein, alpha 1(I) collagen, LCK, IL-3 and GM-CSF promoters. In osteoblasts, supports transcription activation: synergizes with SPEN/MINT to enhance FGFR2-mediated activation of the osteocalcin FGF-responsive element (OCFRE). Inhibits KAT6B-dependent transcriptional activation. In Homo sapiens (Human), this protein is Runt-related transcription factor 2 (RUNX2).